We begin with the raw amino-acid sequence, 478 residues long: PTS system mannitol-specific EIICB component (478 aa).

Residues 1-29 (MQQQEQQQGGMKVKVQRFGSYLSGMIMPN) lie on the Cytoplasmic side of the membrane. The PTS EIIC type-2 domain occupies 18–347 (FGSYLSGMIM…VILKSSKASE (330 aa)). Residues 30 to 51 (IGAFIAWGIITALFIPAGWFPN) form a helical membrane-spanning segment. The Extracellular segment spans residues 52–55 (EQLN). Residues 56–76 (TLVSPMITYLLPLLIAYTGGK) traverse the membrane as a helical segment. Over 77-139 (MIYDHRGGVV…QGFEMLINNF (63 aa)) the chain is Cytoplasmic. The helical transmembrane segment at 140–161 (TAGIVGAALTILAFYAIGPVVL) threads the bilayer. Residues 162–170 (TLNKLLAAG) lie on the Extracellular side of the membrane. The chain crosses the membrane as a helical span at residues 171–191 (VEVIVHANLLPVASVFVEPAK). Topologically, residues 192–278 (VLFLNNAINH…ILMKPALILA (87 aa)) are cytoplasmic. A helical transmembrane segment spans residues 279–298 (AIAGGASGLLTFTIFNAGLV). Topologically, residues 299–318 (AAASPGSIIALMAMTPRGGY) are extracellular. The helical transmembrane segment at 319–340 (FGVLAGVLVAAAVSFIVSAVIL) threads the bilayer. At 341-478 (KSSKASEEDL…YDELIEKLKK (138 aa)) the chain is on the cytoplasmic side. The PTS EIIB type-2 domain occupies 390-478 (NKIIFACDAG…YDELIEKLKK (89 aa)). Residue Cys-396 is the Phosphocysteine intermediate; for EIIB activity of the active site. Cys-396 is modified (phosphocysteine; by EIIA).

Homodimer.

The protein localises to the cell membrane. The catalysed reaction is D-mannitol(out) + N(pros)-phospho-L-histidyl-[protein] = D-mannitol 1-phosphate(in) + L-histidyl-[protein]. Functionally, the phosphoenolpyruvate-dependent sugar phosphotransferase system (sugar PTS), a major carbohydrate active transport system, catalyzes the phosphorylation of incoming sugar substrates concomitantly with their translocation across the cell membrane. The enzyme II CmtAB PTS system is involved in D-mannitol transport. The chain is PTS system mannitol-specific EIICB component from Bacillus subtilis (strain 168).